The following is a 682-amino-acid chain: Methionine--tRNA ligase (682 aa).

A 'HIGH' region motif is present at residues Pro-14–His-24. Zn(2+) is bound by residues Cys-145, Cys-148, Cys-158, and Cys-161. Residues Lys-331–Ser-335 carry the 'KMSKS' region motif. An ATP-binding site is contributed by Lys-334. Positions Ala-580–Lys-682 constitute a tRNA-binding domain.

This sequence belongs to the class-I aminoacyl-tRNA synthetase family. MetG type 1 subfamily. As to quaternary structure, homodimer. Zn(2+) is required as a cofactor.

The protein localises to the cytoplasm. It carries out the reaction tRNA(Met) + L-methionine + ATP = L-methionyl-tRNA(Met) + AMP + diphosphate. Functionally, is required not only for elongation of protein synthesis but also for the initiation of all mRNA translation through initiator tRNA(fMet) aminoacylation. This is Methionine--tRNA ligase from Pseudomonas syringae pv. tomato (strain ATCC BAA-871 / DC3000).